The chain runs to 404 residues: Cysteine desulfurase IscS (404 aa).

Residues 75-76 (AT), Asn155, Gln183, and 203-205 (SAH) each bind pyridoxal 5'-phosphate. At Lys206 the chain carries N6-(pyridoxal phosphate)lysine. Position 243 (Thr243) interacts with pyridoxal 5'-phosphate. Cys328 acts as the Cysteine persulfide intermediate in catalysis. Position 328 (Cys328) interacts with [2Fe-2S] cluster.

This sequence belongs to the class-V pyridoxal-phosphate-dependent aminotransferase family. NifS/IscS subfamily. In terms of assembly, homodimer. Forms a heterotetramer with IscU, interacts with other sulfur acceptors. Requires pyridoxal 5'-phosphate as cofactor.

Its subcellular location is the cytoplasm. It catalyses the reaction (sulfur carrier)-H + L-cysteine = (sulfur carrier)-SH + L-alanine. The protein operates within cofactor biosynthesis; iron-sulfur cluster biosynthesis. In terms of biological role, master enzyme that delivers sulfur to a number of partners involved in Fe-S cluster assembly, tRNA modification or cofactor biosynthesis. Catalyzes the removal of elemental sulfur atoms from cysteine to produce alanine. Functions as a sulfur delivery protein for Fe-S cluster synthesis onto IscU, an Fe-S scaffold assembly protein, as well as other S acceptor proteins. The sequence is that of Cysteine desulfurase IscS from Pseudomonas fluorescens (strain SBW25).